Consider the following 408-residue polypeptide: LL-diaminopimelate aminotransferase (408 aa).

Substrate-binding residues include Y15 and G42. Pyridoxal 5'-phosphate contacts are provided by residues Y72, 108-109 (SK), Y132, N187, Y218, and 246-248 (SFS). Residues K109, Y132, and N187 each contribute to the substrate site. K249 carries the N6-(pyridoxal phosphate)lysine modification. Pyridoxal 5'-phosphate contacts are provided by R257 and N291. 2 residues coordinate substrate: N291 and R387.

It belongs to the class-I pyridoxal-phosphate-dependent aminotransferase family. LL-diaminopimelate aminotransferase subfamily. In terms of assembly, homodimer. The cofactor is pyridoxal 5'-phosphate.

The enzyme catalyses (2S,6S)-2,6-diaminopimelate + 2-oxoglutarate = (S)-2,3,4,5-tetrahydrodipicolinate + L-glutamate + H2O + H(+). The protein operates within amino-acid biosynthesis; L-lysine biosynthesis via DAP pathway; LL-2,6-diaminopimelate from (S)-tetrahydrodipicolinate (aminotransferase route): step 1/1. Functionally, involved in the synthesis of meso-diaminopimelate (m-DAP or DL-DAP), required for both lysine and peptidoglycan biosynthesis. Catalyzes the direct conversion of tetrahydrodipicolinate to LL-diaminopimelate. This chain is LL-diaminopimelate aminotransferase, found in Prochlorococcus marinus (strain NATL1A).